The sequence spans 276 residues: Elongation factor Ts (276 aa).

An involved in Mg(2+) ion dislocation from EF-Tu region spans residues 79–82 (TDFV).

The protein belongs to the EF-Ts family.

Its subcellular location is the cytoplasm. Associates with the EF-Tu.GDP complex and induces the exchange of GDP to GTP. It remains bound to the aminoacyl-tRNA.EF-Tu.GTP complex up to the GTP hydrolysis stage on the ribosome. This is Elongation factor Ts from Buchnera aphidicola subsp. Cinara cedri (strain Cc).